We begin with the raw amino-acid sequence, 166 residues long: Large ribosomal subunit protein uL10 (166 aa).

It belongs to the universal ribosomal protein uL10 family. Part of the ribosomal stalk of the 50S ribosomal subunit. The N-terminus interacts with L11 and the large rRNA to form the base of the stalk. The C-terminus forms an elongated spine to which L12 dimers bind in a sequential fashion forming a multimeric L10(L12)X complex.

In terms of biological role, forms part of the ribosomal stalk, playing a central role in the interaction of the ribosome with GTP-bound translation factors. This Streptococcus pyogenes serotype M28 (strain MGAS6180) protein is Large ribosomal subunit protein uL10.